The chain runs to 367 residues: F-box only protein 25 (367 aa).

The segment at 1–83 (MPFLGQDWRS…NDTNTQSFYR (83 aa)) is interaction with beta-actin. The F-box domain maps to 226 to 274 (LTLSDLPLHMLNNILYRFSDGWDIITLGQVTPTLYMLSEDRQLWKKLCQ).

As to quaternary structure, part of a SCF (SKP1-cullin-F-box) protein ligase complex consisting of FBXO25, SKP1, CUL1 and RBX1. Interacts directly with SKP1 and CUL1. Interacts (via C-terminus) with beta-actin (via N-terminus). As to expression, expressed in all brain tissue observed.

The protein resides in the nucleus. It participates in protein modification; protein ubiquitination. In terms of biological role, substrate-recognition component of the SCF (SKP1-CUL1-F-box protein)-type E3 ubiquitin ligase complex. May play a role in accumulation of expanded polyglutamine (polyQ) protein huntingtin (HTT). The protein is F-box only protein 25 (FBXO25) of Homo sapiens (Human).